A 556-amino-acid chain; its full sequence is PPE family protein PPE2 (556 aa).

Residues alanine 8–alanine 164 are PPE. An SH3-like region spans residues glutamine 201 to leucine 256. The leucine zipper motif stretch occupies residues leucine 319–leucine 340. Disordered regions lie at residues threonine 385 to threonine 418 and glycine 443 to glutamate 556. Pro residues predominate over residues proline 400–valine 417. Residues alanine 456 to proline 471 show a composition bias toward low complexity. A compositionally biased stretch (basic residues) spans glutamine 472–glutamine 481. The Nuclear localization signal signature appears at arginine 473–glutamine 481.

This sequence belongs to the mycobacterial PPE family.

The protein resides in the secreted. It is found in the host cytoplasm. Its subcellular location is the host nucleus. Inhibits nitric oxide (NO) production in activated macrophages. Acts by inhibiting expression of the host inducible nitric oxide synthase (iNOS). PPE2 is translocated into the host macrophage nucleus, where it interacts with a GATA-binding site overlapping with the TATA box of NOS2 (iNOS) promoter, and strongly inhibits NOS2 gene transcription. Reduction in NO production in turn facilitates intracellular survival of the bacilli inside the macrophage. In addition, disrupts the assembly of NADPH oxidase complex, which inhibits NADPH oxidase-mediated reactive oxygen species (ROS) generation in macrophages and favors M.tuberculosis survival. Acts by interacting with NCF2, the cytosolic subunit of NADPH oxidase, and preventing translocation of NCF2 and NCF1 to the membrane, which causes a reduction of the functional assembly of NADPH oxidase complex and a decrease in NADPH oxidase activity. In Mycobacterium tuberculosis (strain CDC 1551 / Oshkosh), this protein is PPE family protein PPE2 (PPE2).